The chain runs to 285 residues: Purine biosynthesis transcriptional repressor PurR (285 aa).

The tract at residues 1–73 (MKFRRSGRLV…GAAGGVKYIP (73 aa)) is DNA binding domain. An effector binding domain region spans residues 74-285 (KMKQAEAEEF…NLLKNGETES (212 aa)). Tyr102 serves as a coordination point for guanosine 3',5'-bis(diphosphate). Residues Ala138, Thr139, Lys140, and Arg160 each coordinate 5-phospho-alpha-D-ribose 1-diphosphate. Guanosine 3',5'-bis(diphosphate) is bound by residues Gly178 and Ser179. 5-phospho-alpha-D-ribose 1-diphosphate contacts are provided by Asp203, Asp204, Phe205, Lys207, and Ala208. Lys207 lines the guanosine 3',5'-bis(diphosphate) pocket. Guanosine 3',5'-bis(diphosphate) contacts are provided by Gly209, Gly210, and Thr211. Thr211 provides a ligand contact to 5-phospho-alpha-D-ribose 1-diphosphate.

This sequence belongs to the purine/pyrimidine phosphoribosyltransferase family. PurR subfamily. Homodimer.

The binding of PurR to DNA, and therefore the repressor activity, is influenced by interaction with the effector molecules 5-phosphoribosyl 1-pyrophosphate (PRPP) and (p)ppGpp. PRPP binds to PurR and reduces affinity of PurR for DNA, which inhibits the repressor activity and induces transcription of the target genes. On the contrary, (p)ppGpp enhances binding of PurR to DNA and repression of the transcription. PRPP and (p)ppGpp compete for PurR binding and allosteric control of transcription. ppGpp maintains PurR-DNA interaction and prevents PRPP from de-repressing PurR regulation during conditions that lead to (p)ppGpp induction, such as upon amino acid starvation. Functionally, DNA-binding transcriptional repressor that controls the expression of a number of genes involved in the synthesis, metabolism and transport of purines. In response to a signal of excess adenine, represses the transcription of the pur operon, which encodes enzymes of the purine biosynthetic pathway. It also represses the expression of the purA and purR genes. In addition, controls the expression of several other genes or operons, which encode enzymes or transporters playing a role in purine nucleotide metabolism. Acts by binding directly to specific DNA sequences, named PurBoxes, in the upstream control regions of affected genes. Two PurBoxes are required for high-affinity PurR binding. Also responds to amino acid starvation via (p)ppGpp, which strongly increases PurR activity and repression of purine nucleotide biosynthesis genes. In Bacillus subtilis (strain 168), this protein is Purine biosynthesis transcriptional repressor PurR.